Consider the following 149-residue polypeptide: Calmodulin (149 aa).

4 EF-hand domains span residues 8–43 (EQIAEFKEAFSLFDKDGDGNITTKELGTVMRSLGQN), 44–79 (PTEAELQDMINEVDADGNGTIDFPEFLTMMARKMAD), 81–116 (DTEEEIREAFKVFDKDGNGFISAAELRHVMTNLGEK), and 117–149 (LSDEEVDEMIREADVDGDGQVNYDEFVKMMLSK). Ca(2+) is bound by residues D21, D23, D25, N27, E32, D57, D59, N61, T63, E68, D94, D96, N98, and E105. At K116 the chain carries N6,N6,N6-trimethyllysine. 5 residues coordinate Ca(2+): D130, D132, D134, Q136, and E141.

This sequence belongs to the calmodulin family.

Functionally, calmodulin mediates the control of a large number of enzymes, ion channels and other proteins by Ca(2+). Among the enzymes to be stimulated by the calmodulin-Ca(2+) complex are a number of protein kinases and phosphatases. In Physarum polycephalum (Slime mold), this protein is Calmodulin.